The primary structure comprises 843 residues: MADDQGRGRRRPLNEDDSSTSRGSGDGPRVKVFRGSSSGDPRADPRIEASRERRALEEAPRREGGPTERKPWGDQYDYLNTRPAELVSKKGTDGVPVMLQTNFFRLKTKPEWRIVHYHVEFEPSIENPRVRMGVLSNHANLLGSGYLFDGLQLFTTRKFEQEITVLSGKSKLDIEYKISIKFVGFISCAEPRFLQVLNLILRRSMKGLNLELVGRNLFDPRAKIEIREFKMELWPGYETSIRQHEKDILLGTEITHKVMRTETIYDIMRRCSHNPARHQDEVRVNVLDLIVLTDYNNRTYRINDVDFGQTPKSTFSCKGRDISFVEYYLTKYNIRIRDHNQPLLISKNRDKALKTNASELVVLIPELCRVTGLNAEMRSNFQLMRAMSSYTRMNPKQRTDRLRAFNHRLQNTPESVKVLRDWNMELDKNVTEVQGRIIGQQNIVFHNGKVPAGENADWQRHFRDQRMLTTPSDGLDRWAVIAPQRNSHELRTLLDSLYRAASGMGLRIRSPQEFIIYDDRTGTYVRAMDDCVRSDPKLILCLVPNDNAERYSSIKKRGYVDRAVPTQVVTLKTTKNRSLMSIATKIAIQLNCKLGYTPWMIELPLSGLMTIGFDIAKSTRDRKRAYGALIASMDLQQNSTYFSTVTECSAFDVLANTLWPMIAKALRQYQHEHRKLPSRIVFYRDGVSSGSLKQLFEFEVKDIIEKLKTEYARVQLSPPQLAYIVVTRSMNTRFFLNGQNPPPGTIVDDVITLPERYDFYLVSQQVRQGTVSPTSYNVLYSSMGLSPEKMQKLTYKMCHLYYNWSGTTRVPAVCQYAKKLATLVGTNLHSIPQNALEKKFYYL.

Positions Met-1–Pro-12 match the Nuclear localization signal motif. Residues Met-1–Tyr-76 are disordered. Residues Met-1 to Lys-257 form an interaction with CBX5 and papi region. Symmetric dimethylarginine is present on residues Arg-7, Arg-9, Arg-10, and Arg-11. The segment covering Pro-41–Trp-72 has biased composition (basic and acidic residues). The 110-residue stretch at Thr-263 to Gly-372 folds into the PAZ domain. The region spanning Leu-538–His-829 is the Piwi domain. Gln-589 provides a ligand contact to Mg(2+). Catalysis depends on residues Asp-614 and Asp-685. Leu-843 is a Mg(2+) binding site.

Belongs to the argonaute family. Piwi subfamily. In terms of assembly, in the ovaries, part of a complex composed of at least Panx, nxf2, piwi and Nxt1. The complex is knowns as Panx-induced co-transcriptional silencing (PICTS) complex, Panx-nxf2-dependent TAP/p15 silencing (Pandas complex), SFiNX (silencing factor interacting nuclear export variant) or piwi-Panx-nxf2-p15 (PPNP) complex. Interacts with vas; this interaction is RNA-independent. Interacts with Dcr-1 and Fmr1; these interactions occur in polar granules. Interacts (via N-terminal region) with CBX5 (via chromoshadow domain). Forms a complex with Hsp83 and Hop; probably Hop mediates the interaction between piwi and Hsp83. Forms a complex with Yb body components armi and fs(1)Yb; this interaction is required for proper piRNA loading and nuclear localization of piwi. Interaction of Piwi and fs(1)Yb is likely to occur via armi. Interacts (via the N-terminal region when unmethylated or symmetrically methylated at Arg-10) with papi (via Tudor domain). Interacts with vret. Interacts with Panx. Interacts with arx. Interacts with Tudor-SN. Interacts with Nup358 (via N-terminus). Associates with the nuclear pore complex via interaction with Elys. Interacts with thoc5; the interaction might be partly RNA-mediated. Interacts with xmas-2. Post-translationally, symmetrically dimethylated, most likely by csul. Methylation at Arg-10 enhances binding to papi whereas methylation at Arg-7, Arg-9 or Arg-11 reduces binding affinity to papi. In terms of processing, phosphorylated on serine and tyrosine residues in an Hsp83-dependent manner. In terms of tissue distribution, expressed in ovaries (at protein level). Expressed somatically in ovariole terminal filament cells, epithelial sheath cells, cap cells and follicle cells (at protein level). Expressed in nurse cells and oocytes in developing egg chambers (at protein level). In embryos, accumulates in pole cells (at protein level). In larval and adult testis, expressed in a germinal proliferative center at the apical tip containing somatic hub cells and mitotically dividing germ stem cells (at protein level).

The protein resides in the cytoplasm. It localises to the nucleus. It is found in the nucleoplasm. The protein localises to the chromosome. In terms of biological role, acts via the piwi-interacting RNA (piRNA) metabolic process, which mediates the repression of transposable elements during meiosis by forming complexes composed of piRNAs and Piwi proteins and governs the methylation and subsequent repression of transposons. Directly binds piRNAs, a class of 24 to 30 nucleotide RNAs that are generated by a Dicer-independent mechanism and are primarily derived from transposons and other repeated sequence elements. In ovarian somatic cells, mediates silencing of transposable elements at the transcriptional level in a mael-dependent manner. Involved in silencing of long terminal repeat (LTR) retrotransposons in male germline. In testis, regulates spermatogenesis together with Tudor-SN. In germ cells, mediates silencing at both transcriptional and post-transcriptional levels and is involved in the maintenance of populations of primary and secondary piRNAs. Piwi-mediated transcriptional silencing is accompanied by the formation of His3 trimethylated on 'Lys-10' (H3K9me3) associated euchromatin and heterochromatin. In ovary, associates predominantly with antisense piRNAs that contain uridine at their 5' end. Association with sense piRNAs is also observed but to a lesser extent. Mediates a somatic signaling mechanism required for the maintenance of germline stem cells to produce and maintain a daughter germline stem cell. It is not essential for the further differentiation of the committed daughter cell. Acts cell autonomously to promote germline stem cell division. Its role in stem cell maintenance does not seem to require nuclear localization. Required maternally for the posterior localization of osk and vas and for pole cell formation during oogenesis and early embryogenesis. Together with Hop and Hsp83, mediates canalization, also known as developmental robustness, likely via epigenetic silencing of existing genetic variants and suppression of transposon-induced new genetic variation. Shows RNA cleavage activity, although is not required for any of its known functions. In the ovaries, forms a complex with nxf2, Panx and Nxt1 which acts as effectors of cotranscriptional transposon silencing. The sequence is that of Protein piwi from Drosophila melanogaster (Fruit fly).